The following is a 278-amino-acid chain: Shikimate dehydrogenase (NADP(+)) (278 aa).

Shikimate contacts are provided by residues 19 to 21 (SRS) and T66. Residue K70 is the Proton acceptor of the active site. Positions 91 and 106 each coordinate shikimate. NADP(+) is bound by residues 129–133 (GAGGA) and F221. Y223 contributes to the shikimate binding site. G242 provides a ligand contact to NADP(+).

Belongs to the shikimate dehydrogenase family. In terms of assembly, homodimer.

The catalysed reaction is shikimate + NADP(+) = 3-dehydroshikimate + NADPH + H(+). Its pathway is metabolic intermediate biosynthesis; chorismate biosynthesis; chorismate from D-erythrose 4-phosphate and phosphoenolpyruvate: step 4/7. Functionally, involved in the biosynthesis of the chorismate, which leads to the biosynthesis of aromatic amino acids. Catalyzes the reversible NADPH linked reduction of 3-dehydroshikimate (DHSA) to yield shikimate (SA). The protein is Shikimate dehydrogenase (NADP(+)) of Anaeromyxobacter dehalogenans (strain 2CP-C).